The primary structure comprises 2013 residues: Centrosomal protein 224 (2013 aa).

HEAT repeat units lie at residues 115–153 (TIEADSAEPVVEALLKGTSSTSPKILLASLAALTQALKT), 158–196 (QIPVKLILKQFSPWFENRDKGIRDQASELFIEIYRWIGK), 200–238 (PLISEALTPIQLKALQDQFEKLPTDPAVPLKYTRSEAAK), 348–386 (TSYVKPFITPILEKFKEKKTSVLQSVHTTMDSLVGKSIS), and 427–465 (TKVTKQLTKIFMEALNDTDSNIRDNASKAFAALGGIIGE). A disordered region spans residues 512-557 (PVSSSNKKPAAATGNSKSSSTTTPTGRSSNSSPLPPPPSSSDDIKN). The span at 524-543 (TGNSKSSSTTTPTGRSSNSS) shows a compositional bias: low complexity. HEAT repeat units lie at residues 724 to 762 (IQQLKPLLDYTKQCLESTNPDVKKSAIKLLCTIKINIGA), 816 to 854 (VDISVKLTPAIITNLSDANWKTRSDALDEIERIIIDANR), 857 to 895 (QPKLGGLIPALKNRLTDNNQKCTITTLNIIGMLSQAMGG), 899 to 937 (EKHARLLIPGILLLLGDSKKPVRDAVISCMNVIVQSDLG), and 977 to 1015 (PSEINTLAKGIISCLQDKSAEIRSLADNLLSILCTQIPL). A disordered region spans residues 1043-1109 (KTGQPIPPPS…QQQQRRSILQ (67 aa)). Positions 1053–1106 (KTKQSTSSSSSSSSTTSQQSSTPSSPQPIRQQQQQQQQQPTQPQQQQQQQQRRS) are enriched in low complexity. HEAT repeat units lie at residues 1240-1279 (EYEASCLVPILLEKSGSATNEQIKQIFKQSIQQLEELCLP), 1281-1314 (VLFRFAIEMVTSQNWRTRVEVLNVMASIIDKNGA), and 1317-1353 (CGNLKVVIPLITQNLNDSQSKQSSLLCLNKLYSHIKD). Low complexity-rich tracts occupy residues 1372–1406 (NNNNNNNNNNNNNNNNNNNNVQQQQQQQQQQQQQQ), 1695–1735 (NRIS…INSS), and 1746–1796 (SNNT…TLST). Disordered stretches follow at residues 1372 to 1413 (NNNN…SLST), 1695 to 1809 (NRIS…YSGK), 1905 to 1949 (NQPS…IAPQ), and 1966 to 1995 (TLNPDQNSGSNNNNSHQNSPSTSSSNDLNS). The span at 1799–1809 (INKEPRDYSGK) shows a compositional bias: basic and acidic residues. Residues 1913–1939 (NNNNNNNNNNNNNNNNNINNNNNNNNN) are compositionally biased toward low complexity. Residues 1940 to 1949 (SGGNENIAPQ) are compositionally biased toward polar residues. A compositionally biased stretch (low complexity) spans 1967–1995 (LNPDQNSGSNNNNSHQNSPSTSSSNDLNS).

The protein belongs to the TOG/XMAP215 family. As to quaternary structure, interacts with eb1 at the microtubule tip, centrosome and kinetochore. Interacts with lis1 in the cortical attachment of microtubules.

It localises to the cytoplasm. Its subcellular location is the cytoskeleton. It is found in the microtubule organizing center. The protein resides in the centrosome. The protein localises to the chromosome. It localises to the centromere. Its subcellular location is the kinetochore. In terms of biological role, involved in regulation of microtubule dynamics. Regulates the interaction of microtubules tips with the centrosome and cell cortex. This Dictyostelium discoideum (Social amoeba) protein is Centrosomal protein 224 (mtaA).